A 217-amino-acid chain; its full sequence is MTNLKLDVLTAEGKTDGQVELPAEIFDREASVALLHQVVNAQLAAKRQGTHSAKTRAEVSGGGRKPFRQKGTGRARQGSIRAPHFTGGGISHGPKPRDYSQRTPKKMIKAALFGALTDRARHERIHVISELVAGQTPSTKSARSFIERITDRRNVLLVVGREDVTAQKSARNLPGVHILFADQLNTYDVLYSDDVVFSVEALNTFINRASGAAQEEK.

The tract at residues 46–102 (KRQGTHSAKTRAEVSGGGRKPFRQKGTGRARQGSIRAPHFTGGGISHGPKPRDYSQR) is disordered.

This sequence belongs to the universal ribosomal protein uL4 family. As to quaternary structure, part of the 50S ribosomal subunit.

One of the primary rRNA binding proteins, this protein initially binds near the 5'-end of the 23S rRNA. It is important during the early stages of 50S assembly. It makes multiple contacts with different domains of the 23S rRNA in the assembled 50S subunit and ribosome. Its function is as follows. Forms part of the polypeptide exit tunnel. The polypeptide is Large ribosomal subunit protein uL4 (Corynebacterium diphtheriae (strain ATCC 700971 / NCTC 13129 / Biotype gravis)).